Here is a 158-residue protein sequence, read N- to C-terminus: Chromobox protein homolog 7 (158 aa).

A Chromo domain is found at 11 to 69; sequence FAVESIRKKRVRKGKVEYLVKWKGWPPKYSTWEPEEHILDPRLVMAYEEKEEKDRASGY. The tract at residues 60 to 124 is disordered; that stretch reads KEEKDRASGY…PPPWTPMLPS (65 aa). Residues 68–78 are compositionally biased toward basic residues; that stretch reads GYRKRGPKPKR.

Component of a PRC1-like complex. Distinct PRC1-like core complexes are composed of a RING1 subunit (RING1B or RING1A), one of the six PCGF proteins (PCGF1-6), one PHC protein (PHC1-3) and one of the CBX proteins (CBX2, CBX4, CBX6, CBX7 or CBX8). The composition of the PRC1 complex may differ between the PRC1 complex in pluripotent embryonic stem cells containing RNF2, CBX7 and PCGF2, and the PRC1 complex in differentiating cells containing RNF2, CBX2, CBX4 and BMI1. Interacts with RING1. Interacts with RNF2/RING1B. Interacts with PCGF1, PCGF2, PCGF3, PCGF5 and PCGF6. Interacts (via chromodomain) with histone H3K9Me3 and H3K27me3. Interacts with H3K9Me2 and H4K20Me1. Interacts (via chromodomain) with single-stranded and double-stranded RNA; RNA binding seems to be required for the localization to chromatin.

The protein localises to the nucleus. It is found in the chromosome. Functionally, component of a Polycomb group (PcG) multiprotein PRC1-like complex, a complex class required to maintain the transcriptionally repressive state of many genes, including Hox genes, throughout development. PcG PRC1 complex acts via chromatin remodeling and modification of histones; it mediates monoubiquitination of histone H2A 'Lys-119', rendering chromatin heritably changed in its expressibility. Promotes histone H3 trimethylation at 'Lys-9' (H3K9me3). Binds to histone H3 trimethylated 'Lys-9' (H3K9me3) or at 'Lys-27' (H3K27me3). May possibly also bind trimethylated lysine residues in other proteins (in vitro). Binds non-coding, single-stranded and double-stranded RNA. Plays a role in the timely repression of differentiation-specific genes in pluripotent embryonic stem cells to maintain the undifferentiated state. Regulator of cellular lifespan by maintaining the repression of CDKN2A, but not by inducing telomerase activity. In Rattus norvegicus (Rat), this protein is Chromobox protein homolog 7 (Cbx7).